A 52-amino-acid polypeptide reads, in one-letter code: Thiocillin (52 aa).

A propeptide spanning residues 1-38 (MSEIKKALNTLEIEDFDAIEMVDVDAMPENEALEIMGA) is cleaved from the precursor. The thiazole-4-carboxylic acid (Ser-Cys) cross-link spans 39-40 (SC). The segment at residues 39-47 (SCTTCVCTC) is a cross-link (pyridine-2,5-dicarboxylic acid (Ser-Cys) (with S-48)). A cross-link (pyridine-2,5-dicarboxylic acid (Ser-Ser) (with C-47)) is located at residues 39-48 (SCTTCVCTCS). The residue at position 42 (Thr42) is a (Z)-2,3-didehydrobutyrine. Positions 42 to 43 (TC) form a cross-link, thiazole-4-carboxylic acid (Thr-Cys). The residue at position 44 (Val44) is a 3-hydroxyvaline (Val); partial. A cross-link (thiazole-4-carboxylic acid (Val-Cys)) is located at residues 44-45 (VC). Position 46 is an O-methylthreonine; partial (Thr46). A cross-link (thiazole-4-carboxylic acid (Thr-Cys)) is located at residues 46–47 (TC). Residues 48–49 (SC) constitute a cross-link (thiazole-4-carboxylic acid (Ser-Cys)). The segment at residues 49–50 (CC) is a cross-link (thiazole-4-carboxylic acid (Cys-Cys)). Position 51 is a (Z)-2,3-didehydrobutyrine (Thr51). 1-amino-2-propanone; alternate is present on Thr52. Position 52 is a decarboxylated threonine; alternate (Thr52).

This sequence belongs to the thiocillin family. Maturation of thiazole and oxazole containing antibiotics involves the enzymatic condensation of a Cys, Ser or Thr with the alpha-carbonyl of the preceding amino acid to form a thioether or ether bond, then dehydration to form a double bond with the alpha-amino nitrogen. Thiazoline or oxazoline ring are dehydrogenated to form thiazole or oxazole rings. In terms of processing, maturation of pyridinyl containing antibiotics involves the cross-linking of a Ser and a Cys-Ser pair usually separated by 7 or 8 residues along the peptide chain. The Ser residues are dehydrated to didehydroalanines, then bonded between their beta carbons. The alpha carbonyl of the Cys condenses with alpha carbon of the first Ser to form a pyridinyl ring. The ring may be multiply dehydrogenated to form a pyridine ring with loss of the amino nitrogen of the first Ser. Post-translationally, the 8 possible modification isomers, differing in the presence of modifications at three positions, have been characterized in PubMed:19196969. Val-44 is modified to 3-hydroxyvaline in forms thiocillin I, thiocillin II, YM-266183, and YM-266184. Thr-46 is modified to O-methylthreonine in forms thiocillin II, thiocillin III, thiocillin IV, and YM-266184. Thr-52 is decarboxylated to (R)-1-aminopropan-2-ol in forms micrococcin P1, thiocillin I, thiocillin II, and thiocillin III. Thr-52 is decarboxylated and oxidized to 1-amino-2-propanone in forms micrococcin P2, YM-266183, YM-266184. and thiocillin IV. The structure of 2,3-didehydrobutyrines is not discussed in PubMed:19196969. However, in Fig. 3 the residues are diagrammed as Z-isomers.

The protein localises to the secreted. Has bacteriocidal activity against Gram-positive bacteria, but not against Gram-negative bacteria. Inhibits bacterial protein biosynthesis by acting on the elongation factor Tu (EF-Tu). This is Thiocillin from Bacillus cereus (strain ATCC 14579 / DSM 31 / CCUG 7414 / JCM 2152 / NBRC 15305 / NCIMB 9373 / NCTC 2599 / NRRL B-3711).